The primary structure comprises 221 residues: Phosphoribosylformylglycinamidine synthase subunit PurQ (221 aa).

Positions 5–221 (TVGIVVFPGS…LYTLRSLITQ (217 aa)) constitute a Glutamine amidotransferase type-1 domain. Catalysis depends on C89, which acts as the Nucleophile. Catalysis depends on residues H197 and E199.

As to quaternary structure, part of the FGAM synthase complex composed of 1 PurL, 1 PurQ and 2 PurS subunits.

It is found in the cytoplasm. It carries out the reaction N(2)-formyl-N(1)-(5-phospho-beta-D-ribosyl)glycinamide + L-glutamine + ATP + H2O = 2-formamido-N(1)-(5-O-phospho-beta-D-ribosyl)acetamidine + L-glutamate + ADP + phosphate + H(+). It catalyses the reaction L-glutamine + H2O = L-glutamate + NH4(+). Its pathway is purine metabolism; IMP biosynthesis via de novo pathway; 5-amino-1-(5-phospho-D-ribosyl)imidazole from N(2)-formyl-N(1)-(5-phospho-D-ribosyl)glycinamide: step 1/2. Part of the phosphoribosylformylglycinamidine synthase complex involved in the purines biosynthetic pathway. Catalyzes the ATP-dependent conversion of formylglycinamide ribonucleotide (FGAR) and glutamine to yield formylglycinamidine ribonucleotide (FGAM) and glutamate. The FGAM synthase complex is composed of three subunits. PurQ produces an ammonia molecule by converting glutamine to glutamate. PurL transfers the ammonia molecule to FGAR to form FGAM in an ATP-dependent manner. PurS interacts with PurQ and PurL and is thought to assist in the transfer of the ammonia molecule from PurQ to PurL. The chain is Phosphoribosylformylglycinamidine synthase subunit PurQ from Prochlorococcus marinus subsp. pastoris (strain CCMP1986 / NIES-2087 / MED4).